Reading from the N-terminus, the 90-residue chain is Probable Fe(2+)-trafficking protein (90 aa).

The protein belongs to the Fe(2+)-trafficking protein family.

In terms of biological role, could be a mediator in iron transactions between iron acquisition and iron-requiring processes, such as synthesis and/or repair of Fe-S clusters in biosynthetic enzymes. In Acinetobacter baylyi (strain ATCC 33305 / BD413 / ADP1), this protein is Probable Fe(2+)-trafficking protein.